Here is a 466-residue protein sequence, read N- to C-terminus: UDP-N-acetylmuramoylalanine--D-glutamate ligase (466 aa).

Residue 124–130 coordinates ATP; that stretch reads GSDGKTT.

This sequence belongs to the MurCDEF family.

It is found in the cytoplasm. It carries out the reaction UDP-N-acetyl-alpha-D-muramoyl-L-alanine + D-glutamate + ATP = UDP-N-acetyl-alpha-D-muramoyl-L-alanyl-D-glutamate + ADP + phosphate + H(+). It participates in cell wall biogenesis; peptidoglycan biosynthesis. Its function is as follows. Cell wall formation. Catalyzes the addition of glutamate to the nucleotide precursor UDP-N-acetylmuramoyl-L-alanine (UMA). The sequence is that of UDP-N-acetylmuramoylalanine--D-glutamate ligase from Acetivibrio thermocellus (strain ATCC 27405 / DSM 1237 / JCM 9322 / NBRC 103400 / NCIMB 10682 / NRRL B-4536 / VPI 7372) (Clostridium thermocellum).